The primary structure comprises 218 residues: uncharacterized protein (218 aa).

A disordered region spans residues 1–67 (MARITNMGKR…KKKRSEYRRL (67 aa)). Residues 29-39 (NSSNTNEESSS) show a composition bias toward low complexity. The segment covering 40–49 (QDNMKASFGS) has biased composition (polar residues). Positions 58–67 (KKKRSEYRRL) are enriched in basic residues. CCHC-type zinc fingers lie at residues 77 to 94 (KFCFACRQQGHIVQDCPE), 100 to 117 (SICFRCGSKEHSLNACSK), and 124 to 141 (AKCFICHENGHLSGQCEQ). The CCHC-type 4; atypical zinc finger occupies 152-168 (CCKFCSSVHHLAKDCDQ).

This is an uncharacterized protein from Schizosaccharomyces pombe (strain 972 / ATCC 24843) (Fission yeast).